The sequence spans 836 residues: MLDKARSQSKHMDESNAAASLLSMETTANNHHYLHNKTSRATLMNSSQDGKKHAEDEVSDGANSRHPTISSASIESLKTTYDENPLLSIMKSTCAPNNTPVHTPSGSPSLKVQSGGDIKDDPKENDTTTTTNTTLQDRRDSDNAVHAAASPLAPSNTPSDPKSLCNGHVAQATDPQISGAIQPQYTATNEDVFPYSSTSTNSNTATTTIVAGAKKKIHLPPPQAPAVSSPGTTAAGSGAGTGSGIRSRTGSDLPLIITSANKNNGKTTNSPMSILSRNNSTNNNDNNSIQSSDSRESSNNNEIGGYLRGGTKRGGSPSNDSQVQHNVHDDQCAVGVAPRNFYFNKDREITDPNVKLDENESKINISFWLNSKYRDEAYSLNESSSNNASSNTDTPTNSRHANTSSSITSRNNFQHFRFNQIPSQPPTSASSFTSTNNNNPQRNNINRGEDPFATSSRPSTGFFYGDLPNRNNRNSPFHTNEQYIPPPPPKYINSKLDGLRSRLLLGPNSASSSTKLDDDLGTAAAVLSNMRSSPYRTHDKPISNVNDMNNTNALGVPASRPHSSSFPSKGVLRPILLRIHNSEQQPIFESNNSTAVFDEDQDQNQDLSPYHLNLNSKKVLDPTFESRTRQVTWNKNGKRIDRRLSAPEQQQQLEVPPLKKSRRSVGNARVASQTNSDYNSLGESSTSSAPSSPSLKASSGLAYTADYPNATSPDFAKSKGKNVKPKAKSKAKQSSKKRPNNTTSKSKANNSQESNNATSSTSQGTRSRTGCWICRLRKKKCTEERPHCFNCERLKLDCHYDAFKPDFVSDPKKKQMKLEEIKKKTKEAKRRAMKKK.

The span at 1–14 (MLDKARSQSKHMDE) shows a compositional bias: basic and acidic residues. 4 disordered regions span residues 1 to 77 (MLDK…IESL), 92 to 168 (STCA…CNGH), 218 to 332 (HLPP…DDQC), and 381 to 464 (NESS…GFFY). 3 stretches are compositionally biased toward polar residues: residues 39-48 (SRATLMNSSQ), 61-77 (GANS…IESL), and 92-112 (STCA…SLKV). Serine 114 carries the post-translational modification Phosphoserine. Basic and acidic residues predominate over residues 117–126 (DIKDDPKEND). 3 positions are modified to phosphoserine: serine 141, serine 150, and serine 228. Residues 226-236 (AVSSPGTTAAG) show a composition bias toward low complexity. A compositionally biased stretch (polar residues) spans 258–272 (TSANKNNGKTTNSPM). Residues 273-305 (SILSRNNSTNNNDNNSIQSSDSRESSNNNEIGG) show a composition bias toward low complexity. Residues serine 316 and serine 318 each carry the phosphoserine modification. The span at 316–325 (SPSNDSQVQH) shows a compositional bias: polar residues. A compositionally biased stretch (low complexity) spans 381–398 (NESSSNNASSNTDTPTNS). The span at 399–414 (RHANTSSSITSRNNFQ) shows a compositional bias: polar residues. The span at 426 to 446 (PTSASSFTSTNNNNPQRNNIN) shows a compositional bias: low complexity. The SIN3-binding stretch occupies residues 508 to 594 (NSASSSTKLD…QPIFESNNST (87 aa)). The tract at residues 636–766 (NGKRIDRRLS…ATSSTSQGTR (131 aa)) is disordered. Serine 645 carries the phosphoserine modification. The span at 670–679 (VASQTNSDYN) shows a compositional bias: polar residues. Residues 680-702 (SLGESSTSSAPSSPSLKASSGLA) show a composition bias toward low complexity. Residues 718–739 (SKGKNVKPKAKSKAKQSSKKRP) show a composition bias toward basic residues. Residues 740–751 (NNTTSKSKANNS) are compositionally biased toward low complexity. Positions 771 to 798 (CWICRLRKKKCTEERPHCFNCERLKLDC) form a DNA-binding region, zn(2)-C6 fungal-type.

In terms of assembly, component of the RPD3C(L) complex composed of at least ASH1, CTI6, DEP1, PHO23, RPD3, RXT2, RXT3, SAP30, SDS3, SIN3, UME1 and UME6. Interacts with RIM11, MCK1 and IME1. In terms of processing, phosphorylated by RIM11 and MCK1.

The protein localises to the nucleus. In terms of biological role, component of the RPD3C(L) histone deacetylase complex (HDAC) responsible for the deacetylation of lysine residues on the N-terminal part of the core histones (H2A, H2B, H3 and H4). Histone deacetylation gives a tag for epigenetic repression and plays an important role in transcriptional regulation, cell cycle progression and developmental events. Binds to the URS1 site (5'-AGCCGCCGA-3') and recruits the RPD3 histone deacetylase complex to the promoters to negatively regulate the expression of many genes including CAR1 (arginase), several required for sporulation, mating type switching, inositol metabolism, and oxidative carbon metabolism. Also recruits the ISW2 chromatin remodeling complex to promoters in a second gene repression pathway. Associates with the master regulator of meiosis IME1 in order to activate the expression of meiosis genes. Has both a positive and negative role in regulating phospholipid biosynthesis. The polypeptide is Transcriptional regulatory protein UME6 (UME6) (Saccharomyces cerevisiae (strain ATCC 204508 / S288c) (Baker's yeast)).